Reading from the N-terminus, the 451-residue chain is Clusterin (451 aa).

Residues 1–18 (MELPLLALLSLGLVCQGG) form the signal peptide. 5 cysteine pairs are disulfide-bonded: C98-C314, C109-C306, C112-C303, C117-C296, and C125-C286. N99, N141, N278, N355, N375, and N447 each carry an N-linked (GlcNAc...) asparagine glycan.

The protein belongs to the clusterin family. In terms of assembly, antiparallel disulfide-linked heterodimer of an alpha chain and a beta chain. Self-associates and forms higher oligomers. Interacts with a broad range of misfolded proteins. In terms of processing, proteolytically cleaved on its way through the secretory system, probably within the Golgi lumen. Post-translationally, polyubiquitinated, leading to proteasomal degradation.

The protein localises to the secreted. Its subcellular location is the cytoplasmic vesicle. The protein resides in the secretory vesicle. It is found in the chromaffin granule. It localises to the nucleus. The protein localises to the cytoplasm. Its subcellular location is the mitochondrion membrane. The protein resides in the cytosol. It is found in the endoplasmic reticulum. Its function is as follows. Functions as extracellular chaperone that prevents aggregation of nonnative proteins. Prevents stress-induced aggregation of blood plasma proteins. Does not require ATP. Maintains partially unfolded proteins in a state appropriate for subsequent refolding by other chaperones, such as HSPA8/HSC70. Does not refold proteins by itself. Binding to cell surface receptors triggers internalization of the chaperone-client complex and subsequent lysosomal or proteasomal degradation. When secreted, protects cells against apoptosis and against cytolysis by complement: inhibits assembly of the complement membrane attack complex (MAC) by preventing polymerization of C9 pore component of the MAC complex. Intracellular forms interact with ubiquitin and SCF (SKP1-CUL1-F-box protein) E3 ubiquitin-protein ligase complexes and promote the ubiquitination and subsequent proteasomal degradation of target proteins. Modulates NF-kappa-B transcriptional activity. Promotes apoptosis when in the nucleus. Inhibits apoptosis when associated with the mitochondrial membrane by interference with BAX-dependent release of cytochrome c into the cytoplasm. Plays a role in the regulation of cell proliferation. The chain is Clusterin (CLU) from Coturnix japonica (Japanese quail).